The chain runs to 253 residues: Shikimate dehydrogenase (NADP(+)) (253 aa).

Shikimate is bound by residues 13–15 and threonine 59; that span reads SIS. Residue lysine 63 is the Proton acceptor of the active site. Glutamate 74 provides a ligand contact to NADP(+). Positions 83 and 94 each coordinate shikimate. NADP(+)-binding positions include 115–119, 139–144, and valine 199; these read GAGGA and NRTIER. Tyrosine 201 lines the shikimate pocket. Residue glycine 221 participates in NADP(+) binding.

It belongs to the shikimate dehydrogenase family. In terms of assembly, homodimer.

The enzyme catalyses shikimate + NADP(+) = 3-dehydroshikimate + NADPH + H(+). It participates in metabolic intermediate biosynthesis; chorismate biosynthesis; chorismate from D-erythrose 4-phosphate and phosphoenolpyruvate: step 4/7. Functionally, involved in the biosynthesis of the chorismate, which leads to the biosynthesis of aromatic amino acids. Catalyzes the reversible NADPH linked reduction of 3-dehydroshikimate (DHSA) to yield shikimate (SA). In Thermotoga maritima (strain ATCC 43589 / DSM 3109 / JCM 10099 / NBRC 100826 / MSB8), this protein is Shikimate dehydrogenase (NADP(+)).